The following is a 724-amino-acid chain: Pre-mRNA-splicing factor CLF1 (724 aa).

HAT repeat units follow at residues 55–87, 89–121, 123–155, 157–188, 190–221, 223–262, 264–298, 308–340, 352–386, 396–432, 434–465, 467–499, 501–534, 536–567, 585–626, and 635–667; these read EFQA…WEAS, NEYE…MELK, RNIN…LEEL, LNVS…LEER, NELD…FEED, GQPD…METR, KEFE…FEKQ, TVLG…LEED, VEPM…LWLQ, KDYD…FEIR, LDVS…LEMR, REFD…VESA, EDFE…FEAG, GERE…MEIA, GDAD…EHGD, and DMLP…DDEK. The segment at 681–724 is disordered; the sequence is QAWAQQRAGQGEEGGLSYDLPSDSESENEDEDGDNREEEGMDQD. The span at 702–724 shows a compositional bias: acidic residues; it reads SDSESENEDEDGDNREEEGMDQD.

Belongs to the crooked-neck family. As to quaternary structure, associated with the spliceosome.

The protein localises to the nucleus. Involved in pre-mRNA splicing and cell cycle progression. Required for the spliceosome assembly and initiation of the DNA replication. The sequence is that of Pre-mRNA-splicing factor CLF1 (CLF1) from Cryptococcus neoformans var. grubii serotype A (strain H99 / ATCC 208821 / CBS 10515 / FGSC 9487) (Filobasidiella neoformans var. grubii).